A 120-amino-acid chain; its full sequence is Meiosis expressed gene 1 protein homolog (120 aa).

Residues 1–45 (MDGLAIGGVSAPMTAERPQQVKKQLSRRTPDAADGRKPTRMERAK) form a disordered region. Residues 28-45 (RTPDAADGRKPTRMERAK) are compositionally biased toward basic and acidic residues.

It belongs to the MEIG1 family.

The sequence is that of Meiosis expressed gene 1 protein homolog from Oxyrrhis marina (Dinoflagellate).